The following is an 85-amino-acid chain: Putative membrane protein insertion efficiency factor (85 aa).

The protein belongs to the UPF0161 family.

Its subcellular location is the cell membrane. Could be involved in insertion of integral membrane proteins into the membrane. The chain is Putative membrane protein insertion efficiency factor from Leifsonia xyli subsp. xyli (strain CTCB07).